A 229-amino-acid polypeptide reads, in one-letter code: Large ribosomal RNA subunit accumulation protein YCED homolog 2, chloroplastic (229 aa).

Residues 1–42 (MDVRCLISPNLLNSKIKVSGNTHHLPFSSLSKKHQASSPIQA) constitute a chloroplast transit peptide.

It belongs to the DUF177 domain family.

The protein localises to the plastid. It is found in the chloroplast. Functionally, may play a role in synthesis, processing and/or stability of 23S rRNA. The chain is Large ribosomal RNA subunit accumulation protein YCED homolog 2, chloroplastic from Arabidopsis thaliana (Mouse-ear cress).